Reading from the N-terminus, the 713-residue chain is Calpain-1 catalytic subunit (713 aa).

The region spanning L55–T354 is the Calpain catalytic domain. Active-site residues include C115, H272, and N296. Phosphothreonine is present on T354. The domain III stretch occupies residues P355–D525. The linker stretch occupies residues Q526 to E541. Residues I542–F712 form a domain IV region. EF-hand domains follow at residues D557–K575, F584–F609, N614–K649, and V679–A713. Positions 597, 599, 601, 603, 608, 627, 629, 631, 633, and 638 each coordinate Ca(2+).

This sequence belongs to the peptidase C2 family. In terms of assembly, forms a heterodimer with a small (regulatory) subunit CAPNS1. Ca(2+) serves as cofactor. Post-translationally, undergoes calcium-induced successive autoproteolytic cleavages that generate a membrane-bound 78 kDa active form and an intracellular 75 kDa active form. Calpastatin reduces with high efficiency the transition from 78 kDa to 75 kDa calpain forms.

The protein resides in the cytoplasm. It is found in the cell membrane. It catalyses the reaction Broad endopeptidase specificity.. Its activity is regulated as follows. Activated by micromolar concentrations of calcium and inhibited by calpastatin. Functionally, calcium-regulated non-lysosomal thiol-protease which catalyzes limited proteolysis of substrates involved in cytoskeletal remodeling and signal transduction. Proteolytically cleaves CTBP1 at 'Asn-364', 'Gly-377' and 'His-399'. Cleaves and activates caspase-7 (CASP7). The chain is Calpain-1 catalytic subunit from Rattus norvegicus (Rat).